The chain runs to 560 residues: Eukaryotic translation initiation factor 3 subunit D-1 (560 aa).

The interval 98 to 166 is disordered; it reads VQKPPHQRGR…RGPPPKMRES (69 aa). The span at 100–121 shows a compositional bias: basic residues; that stretch reads KPPHQRGRFRNMRNSRSGRGRN. Thr-128 is subject to Phosphothreonine. The segment covering 147-156 has biased composition (basic residues); it reads GRGMGKKFGH. The segment at 291 to 305 is RNA gate; sequence EFDLLTVNESSVEPP.

Belongs to the eIF-3 subunit D family. In terms of assembly, component of the eukaryotic translation initiation factor 3 (eIF-3) complex. The eIF-3 complex interacts with pix.

It is found in the cytoplasm. Functionally, mRNA cap-binding component of the eukaryotic translation initiation factor 3 (eIF-3) complex, which is involved in protein synthesis of a specialized repertoire of mRNAs and, together with other initiation factors, stimulates binding of mRNA and methionyl-tRNAi to the 40S ribosome. The eIF-3 complex specifically targets and initiates translation of a subset of mRNAs involved in cell proliferation. In the eIF-3 complex, eif3d specifically recognizes and binds the 7-methylguanosine cap of a subset of mRNAs. In Drosophila melanogaster (Fruit fly), this protein is Eukaryotic translation initiation factor 3 subunit D-1.